The chain runs to 564 residues: Probable diguanylate cyclase DgcQ (564 aa).

The next 2 helical transmembrane spans lie at 20–40 (LGPG…STLL) and 360–380 (IALT…WYVI). The GGDEF domain maps to 428-563 (HPFSVIQVDL…GRNRVFASDN (136 aa)). Asp436 contributes to the Mg(2+) binding site. Positions 444, 449, and 453 each coordinate substrate. Mg(2+) is bound at residue Glu479. The active-site Proton acceptor is Glu479.

Homodimer. Mg(2+) is required as a cofactor.

It is found in the cell inner membrane. It carries out the reaction 2 GTP = 3',3'-c-di-GMP + 2 diphosphate. The protein operates within glycan metabolism; bacterial cellulose biosynthesis. It functions in the pathway purine metabolism; 3',5'-cyclic di-GMP biosynthesis. Catalyzes the synthesis of cyclic-di-GMP (c-di-GMP) via the condensation of 2 GTP molecules. Cyclic-di-GMP is a second messenger which controls cell surface-associated traits in bacteria. Involved in the regulation of cellulose production. In Escherichia coli (strain K12), this protein is Probable diguanylate cyclase DgcQ.